A 156-amino-acid chain; its full sequence is Small ribosomal subunit protein uS7 (156 aa).

This sequence belongs to the universal ribosomal protein uS7 family. As to quaternary structure, part of the 30S ribosomal subunit. Contacts proteins S9 and S11.

One of the primary rRNA binding proteins, it binds directly to 16S rRNA where it nucleates assembly of the head domain of the 30S subunit. Is located at the subunit interface close to the decoding center, probably blocks exit of the E-site tRNA. The polypeptide is Small ribosomal subunit protein uS7 (Oceanobacillus iheyensis (strain DSM 14371 / CIP 107618 / JCM 11309 / KCTC 3954 / HTE831)).